The primary structure comprises 359 residues: Methylthioribose-1-phosphate isomerase (359 aa).

Residue Asp-235 is the Proton donor of the active site.

It belongs to the eIF-2B alpha/beta/delta subunits family. MtnA subfamily.

Its subcellular location is the cytoplasm. The protein localises to the nucleus. It catalyses the reaction 5-(methylsulfanyl)-alpha-D-ribose 1-phosphate = 5-(methylsulfanyl)-D-ribulose 1-phosphate. The protein operates within amino-acid biosynthesis; L-methionine biosynthesis via salvage pathway; L-methionine from S-methyl-5-thio-alpha-D-ribose 1-phosphate: step 1/6. In terms of biological role, catalyzes the interconversion of methylthioribose-1-phosphate (MTR-1-P) into methylthioribulose-1-phosphate (MTRu-1-P). The chain is Methylthioribose-1-phosphate isomerase (mri1) from Schizosaccharomyces pombe (strain 972 / ATCC 24843) (Fission yeast).